Reading from the N-terminus, the 75-residue chain is MKEQSFEANLKKLEKIVAQLEDEKTDLDKSAELFEEGSALAAELSAKLKTIKFKVSEIKEKQGDLFTEEINNDDE.

This sequence belongs to the XseB family. As to quaternary structure, heterooligomer composed of large and small subunits.

The protein localises to the cytoplasm. It carries out the reaction Exonucleolytic cleavage in either 5'- to 3'- or 3'- to 5'-direction to yield nucleoside 5'-phosphates.. Functionally, bidirectionally degrades single-stranded DNA into large acid-insoluble oligonucleotides, which are then degraded further into small acid-soluble oligonucleotides. The sequence is that of Exodeoxyribonuclease 7 small subunit from Elusimicrobium minutum (strain Pei191).